We begin with the raw amino-acid sequence, 209 residues long: PRA1 family protein A2 (209 aa).

The next 4 membrane-spanning stretches (helical) occupy residues 51 to 72, 76 to 98, 142 to 162, and 163 to 183; these read LYYY…ALVT, ALVG…AASF, RWVF…SSCG, and LLWV…HASI.

Belongs to the PRA1 family.

The protein localises to the endosome membrane. In terms of biological role, may be involved in both secretory and endocytic intracellular trafficking in the endosomal/prevacuolar compartments. This Arabidopsis thaliana (Mouse-ear cress) protein is PRA1 family protein A2 (PRA1A2).